Reading from the N-terminus, the 627-residue chain is MDLISVLPSASKSCVCLHKPLSSSTHKLKPFCKTIRILVMPRRWEFARPSMSLSTVASEDDIQRRTGGYLSNLWNDDVIQFLSTPYGELAYRERAERLIDEVRDIFSSMSLEDGEFSDLIQRLWMVDNVERLGIDRHFKNEIKSALDYVYSYWSEKGIGCGTKSIITNLNSTALGFRTLRLHGYPVSADVLKHFRNQIGQFVSCPSETEEDIRIMVNLYRASLIAFPVAFPGEKVMEEAESFSEKYLKETLQKIPDCSLSREIGDVLEHGWHTNLPRLEARNYIDVFGQDTKNMEPNRKTEKLLELAKLEFNIFQSIQKTELESLLRWWNDSGSPQITFTRHRHVEYYTLASCIAFEPQHSGFRLGFAKACHILTVLDDMYDLFGTVDELKLFTAAIKRWDPSATDCLPQYMKGIYMMVYNTVNEMSAEAQKAQGRDTLNYARQAWEDCLDSHMQEAKWIATGFLPTFEEYLENGKVSSAHRVSALQPMLTMDIPFPPHILKEVDFPSNLNDLACAMLRLRGDTRCYQADRARGEETSCISCYMKDNPGATEEDALNHLNVMISGVIKELNWELLKPNSSVPISSKKINFDITRAFHYGYKYRDGYSVSSVETKSLVMRTLLEPVPL.

Residues 1 to 52 (MDLISVLPSASKSCVCLHKPLSSSTHKLKPFCKTIRILVMPRRWEFARPSMS) constitute a chloroplast transit peptide. The Mg(2+) site is built by aspartate 378, aspartate 382, and aspartate 530. The DDXXD motif motif lies at 378–382 (DDMYD).

It belongs to the terpene synthase family. Tpsd subfamily. The cofactor is Mg(2+). It depends on Mn(2+) as a cofactor.

The protein resides in the plastid. The protein localises to the chloroplast. The catalysed reaction is (2E)-geranyl diphosphate + H2O = (S)-alpha-terpineol + diphosphate. The protein operates within terpene metabolism; oleoresin biosynthesis. Involved in defensive oleoresin formation in conifers in response to insect attack or other injury. Involved in monoterpene (C10) olefins biosynthesis. Produces 57.3% alpha-terpineol (15.1% (+)/84.9% (-)), 27.6% limonene (25.2% (+)/74.8% (-)), 8% terpinolene, 4.7% beta-pinene (14.8% (+)/85.2% (-)), 1.3% alpha-pinene (100% (+)) and 1.1% myrcene. This Pinus taeda (Loblolly pine) protein is (-)-alpha-terpineol synthase, chloroplastic (PT10).